The chain runs to 813 residues: Palmitoyltransferase AKR1 (813 aa).

A disordered region spans residues 1–83 (MAKKKSKSKS…PVTTSNETDP (83 aa)). Residues 1–387 (MAKKKSKSKS…KPWVSAKLGK (387 aa)) are Cytoplasmic-facing. Low complexity predominate over residues 9–24 (KSSSPKPKVSSTAAKP). A compositionally biased stretch (polar residues) spans 28–46 (DNQQNIENVQDSPSALQQQ). Residues 47–78 (SATAEESENTATTATPSEGTTATTESSPVTTS) show a composition bias toward low complexity. ANK repeat units follow at residues 133 to 162 (PTLA…VLVN), 167 to 196 (DEIT…NPNQ), 201 to 231 (LKAS…DPNL), 235 to 264 (QTYN…STDS), 276 to 305 (SNRT…DVSK), and 309 to 338 (SLFI…DIYF). A helical membrane pass occupies residues 388 to 408 (IITFLTPYFLLPLSFNVLSMG). The Lumenal segment spans residues 409–412 (GDQG). Residues 413–433 (GFIIPKLILAIGILGGGIYLL) form a helical membrane-spanning segment. Topologically, residues 434 to 452 (NKLIISQYIFDDKKLAKSP) are cytoplasmic. The helical transmembrane segment at 453–473 (ILAGVFSATAFWSVLVWLYNI) threads the bilayer. At 474-485 (LPTTFIHNFFAN) the chain is on the lumenal side. Residues 486 to 506 (VIMAILIAIFTWSFFKAMFIN) form a helical membrane-spanning segment. The Cytoplasmic segment spans residues 507-579 (PGFVPTPADN…YNDIGVRNHK (73 aa)). A DHHC domain is found at 536-586 (HFCVNSFVRKPLRSRYSKHNKRLIARFDHSCPWVYNDIGVRNHKIFITFVY). The S-palmitoyl cysteine intermediate role is filled by Cys566. The chain crosses the membrane as a helical span at residues 580–600 (IFITFVYSLNMAIFVFLYLSL). Topologically, residues 601–642 (QYFDKVKDQYDSDDEGEGEGFVCSILGDDMCYGYKNHHFHFN) are lumenal. A helical membrane pass occupies residues 643–663 (VFMWDLFQCVWVSFLCIVQTF). Over 664 to 813 (QILKGLTTWE…VDYYTLYSYH (150 aa)) the chain is Cytoplasmic.

The protein belongs to the DHHC palmitoyltransferase family. AKR/ZDHHC17 subfamily.

The protein resides in the early endosome membrane. Its subcellular location is the golgi apparatus membrane. It catalyses the reaction L-cysteinyl-[protein] + hexadecanoyl-CoA = S-hexadecanoyl-L-cysteinyl-[protein] + CoA. Palmitoyltransferase specific for casein kinase 1. The polypeptide is Palmitoyltransferase AKR1 (AKR1) (Candida albicans (strain SC5314 / ATCC MYA-2876) (Yeast)).